The following is a 1085-amino-acid chain: MEASTTTVKARSTHYICGHAGDSFVKIIYYKDKVKAVVSYLNMNDYLNTYALKCVIPEKITKDFFSSCPDDLLYSTLASIQRGYSPKKKEELGGKWEPLLLLYHRGEEYIIRAVVPQRRCEDCGKQFVSSHQCNVRRREFYHHAVLPDTKTWWKPIKFSPIGALSNAKRLFIIYDIETYTFHSGYGKQLVPYLLVMQFKGDSRLRCEAEKIALECGFQPYRQCFMMLNKARDVIGHKFKDMRVQLQKRAASDIWSRYREKHDILSEEGVSYAQLEAMAKDNLLKTDAEPEFTEIIVVGHNITGFDEIVLASHVLEGLPKDEELQMFKITRNFMPRAGKLLFNDVIMALPNAAFQKPKQSTFQRWKTGDLRPEDLKWEGVRFMVRDTVLLTHSSLRNAAQAYQLEVSKGHCPYDALNQYFMVGTYLCDENMYPAREYWSSDEEYLENKPPDGEKYDLVQKAVDYCVNDVKVTVALVKKLCSGYQQFCDEVLKLDCTFNVFQRPTISSTTHAMFKQMFYKSEPSAVGKFLPNLEAPSEVMYEHIRKSVRGGRCYPSFLGVFTEPHLCYDICGMYASALSHPMPYGPTLSPFDSAVAIAEFQRKLDGQSELSYFDPDIFPMIVVADAFPPSLHCLDVLPPLCSKRSGKLCWTNEPLLGEVLTTVDLIMLKNRGWRVKLIQNAECYAVWREWRPLCREYVSINIAAKEKADREKNQTQRSISKLLSNALYGSFATRLDNKQVVFMDDMSSTTQSELRSGKASIVSMTSVCSRSLPQKDTSFWERYFNLPQVEDSISAELNDEPETEPFIGGERSHVIYKPITFLSAECDNLLLATVQSNSDWVKNDRYATQVASFVLAWSRAFMSEWATILYGEDIGVPYEQRKLKSVYGDTDSLFLTGEGHRLMITKGRHKLKSSGNSLVYRDDGNLAWLVECETSCPSCKSDSFSSESCFLAPKLYALKDTTCPSCGLVSGGKLRAKGHAKSCITYDVLKSCFLDHYLLERPTEQYQSERTPIKRTLANGSANSAPFTVVEKQLARVIRPWNDPTMARGTDLSQGFLLFPYDQKRPNPRPQEPLLENPFWDDSSQTA.

Residues 1059 to 1085 (YDQKRPNPRPQEPLLENPFWDDSSQTA) form a disordered region.

The protein belongs to the DNA polymerase type-B family. Heterodimer with the terminal protein; this heterodimer binds to bp 9 to 18 of the genome. Forms a complex with viral pTP, DBP and hosts NFIA and POU2F1/OCT1 for initiation of replication.

It is found in the host nucleus. It carries out the reaction DNA(n) + a 2'-deoxyribonucleoside 5'-triphosphate = DNA(n+1) + diphosphate. Functionally, eukaryotic-type DNA polymerase involved in viral genomic replication. DNA synthesis is protein primed, and acts in a strand displacement replication. In terms of biological role, eukaryotic-type DNA polymerase involved in viral genomic replication. DNA synthesis is protein primed, and acts in a strand displacement replication. Assembles in complex with viral pTP, DBP, host NFIA and host POU2F1/OCT1 on viral origin of replication. The polymerase covalently transfers dCMP onto pTP, thereby initiating complementary strand synthesis. The polypeptide is DNA polymerase (Pantherophis guttatus (Corn snake)).